The following is a 180-amino-acid chain: High mobility group protein B1 (180 aa).

Positions 1-8 (VNFSEFSK) match the Nuclear localization signal (NLS) 1 motif. The HMG box 1 DNA-binding region spans 1 to 44 (VNFSEFSKKCSERWKTMSAKEKGKFEDMAKADKARYEREMKTYI). Position 8 is an N6-acetyllysine (Lys8). Residues Lys8 and Lys9 each participate in an isoglutamyl lysine isopeptide (Lys-Gln) (interchain with Q-?) cross-link. A Cysteine sulfonic acid (-SO3H) modification is found at Cys10. Lys33 participates in a covalent cross-link: Isoglutamyl lysine isopeptide (Lys-Gln) (interchain with Q-?). The segment at 45–61 (PPKGETKKKFKDPNAPK) is LPS binding (Lipid A). Positions 54 to 73 (FKDPNAPKRPPSAFFLFCSE) are cytokine-stimulating activity. N6-acetyllysine is present on Lys55. Positions 60–128 (PKRPPSAFFL…KYEKDIAAYR (69 aa)) form a DNA-binding region, HMG box 2. Position 65 is a phosphoserine (Ser65). Cys71 carries the post-translational modification Cysteine sulfonic acid (-SO3H). Residues Lys92, Lys93, Lys106, Lys137, Lys138, Lys142, and Lys145 each carry the N6-acetyllysine modification. Positions 115-148 (KLKEKYEKDIAAYRAKGKPDAAKKGVVKAEKSKK) are binding to AGER/RAGE. Over residues 126–144 (AYRAKGKPDAAKKGVVKAE) the composition is skewed to basic and acidic residues. Residues 126–180 (AYRAKGKPDAAKKGVVKAEKSKKKKEEEDDEEDEEDEEEEEEEEDEDEEEDDDDE) are disordered. The Nuclear localization signal (NLS) 2 signature appears at 143-149 (AEKSKKK). The interval 143–149 (AEKSKKK) is NLS 2. Lys145 participates in a covalent cross-link: Isoglutamyl lysine isopeptide (Lys-Gln) (interchain with Q-?). At Ser146 the chain carries ADP-ribosylserine. Lys147, Lys148, Lys149, and Lys150 each carry N6-acetyllysine. Isoglutamyl lysine isopeptide (Lys-Gln) (interchain with Q-?) cross-links involve residues Lys147, Lys148, and Lys149. The segment covering 152–180 (EEDDEEDEEDEEEEEEEEDEDEEEDDDDE) has biased composition (acidic residues).

This sequence belongs to the HMGB family. In terms of assembly, interacts (fully reduced HMGB1) with CXCL12; probably in a 1:2 ratio involving two molecules of CXCL12, each interacting with one HMG box of HMGB1; inhibited by glycyrrhizin. Associates with the TLR4:LY96 receptor complex. Component of the RAG complex composed of core components RAG1 and RAG2, and associated component HMGB1 or HMGB2. Interacts (in cytoplasm upon starvation) with BECN1; inhibits the interaction of BECN1 and BCL2 leading to promotion of autophagy. Interacts with KPNA1; involved in nuclear import. Interacts with SREBF1, TLR2, TLR4, TLR9, PTPRZ1, APEX1, FEN1, POLB, TERT. Interacts with IL1B, AGER, MSH2, XPA, XPC, HNF1A, TP53. Interacts with CD24; the probable CD24:SIGLEC10 complex is proposed to inhibit HGMB1-mediated tissue damage immune response. Interacts with THBD; prevents HGMB1 interaction with ACER/RAGE and inhibits HGMB1 pro-inflammatory activity. Interacts with HAVCR2; impairs HMGB1 binding to B-DNA and likely HMGB1-mediated innate immune response. Interacts with XPO1; mediating nuclear export. Interacts with receptor RAGE/AGER. Post-translationally, phosphorylated at serine residues. Phosphorylation in both NLS regions is required for cytoplasmic translocation followed by secretion. In terms of processing, acetylated on multiple sites upon stimulation with LPS. Acetylation on lysine residues in the nuclear localization signals (NLS 1 and NLS 2) leads to cytoplasmic localization and subsequent secretion. Reduction/oxidation of cysteine residues and a possible intramolecular disulfide bond give rise to different redox forms with specific functional activities in various cellular compartments: 1- fully reduced HMGB1 (HMGB1C23hC45hC106h), 2-disulfide HMGB1 (HMGB1C23-C45C106h) and 3- sulfonyl HMGB1 (HMGB1C23soC45soC106so). Post-translationally, poly-ADP-ribosylated by PARP1 when secreted following stimulation with LPS. In terms of processing, in vitro cleavage by CASP1 is liberating a HMG box 1-containing peptide which may mediate immunogenic activity; the peptide antagonizes apoptosis-induced immune tolerance. Can be proteolytically cleaved by a thrombin:thrombomodulin complex; reduces binding to heparin and pro-inflammatory activities. Forms covalent cross-links mediated by transglutaminase TGM2, between a glutamine and the epsilon-amino group of a lysine residue, forming homopolymers and heteropolymers.

It is found in the nucleus. The protein localises to the chromosome. Its subcellular location is the cytoplasm. It localises to the secreted. The protein resides in the cell membrane. It is found in the endosome. The protein localises to the endoplasmic reticulum-Golgi intermediate compartment. Its function is as follows. Multifunctional redox sensitive protein with various roles in different cellular compartments. In the nucleus is one of the major chromatin-associated non-histone proteins and acts as a DNA chaperone involved in replication, transcription, chromatin remodeling, V(D)J recombination, DNA repair and genome stability. Proposed to be an universal biosensor for nucleic acids. Promotes host inflammatory response to sterile and infectious signals and is involved in the coordination and integration of innate and adaptive immune responses. In the cytoplasm functions as a sensor and/or chaperone for immunogenic nucleic acids implicating the activation of TLR9-mediated immune responses, and mediates autophagy. Acts as a danger-associated molecular pattern (DAMP) molecule that amplifies immune responses during tissue injury. Released to the extracellular environment can bind DNA, nucleosomes, IL-1 beta, CXCL12, AGER isoform 2/sRAGE, lipopolysaccharide (LPS) and lipoteichoic acid (LTA), and activates cells through engagement of multiple surface receptors. In the extracellular compartment fully reduced HMGB1 (released by necrosis) acts as a chemokine, disulfide HMGB1 (actively secreted) as a cytokine, and sulfonyl HMGB1 (released from apoptotic cells) promotes immunological tolerance. Has proangiogenic activity. May be involved in platelet activation. Binds to phosphatidylserine and phosphatidylethanolamide. Bound to RAGE mediates signaling for neuronal outgrowth. May play a role in accumulation of expanded polyglutamine (polyQ) proteins. In terms of biological role, nuclear functions are attributed to fully reduced HGMB1. Associates with chromatin and binds DNA with a preference to non-canonical DNA structures such as single-stranded DNA, DNA-containing cruciforms or bent structures, supercoiled DNA and ZDNA. Can bent DNA and enhance DNA flexibility by looping thus providing a mechanism to promote activities on various gene promoters by enhancing transcription factor binding and/or bringing distant regulatory sequences into close proximity. May be involved in nucleotide excision repair (NER), mismatch repair (MMR) and base excision repair (BER) pathways, and double strand break repair such as non-homologous end joining (NHEJ). Involved in V(D)J recombination by acting as a cofactor of the RAG complex: acts by stimulating cleavage and RAG protein binding at the 23 bp spacer of conserved recombination signal sequences (RSS). In vitro can displace histone H1 from highly bent DNA. Can restructure the canonical nucleosome leading to relaxation of structural constraints for transcription factor-binding. Enhances binding of sterol regulatory element-binding proteins (SREBPs) such as SREBF1 to their cognate DNA sequences and increases their transcriptional activities. Facilitates binding of TP53 to DNA. May be involved in mitochondrial quality control and autophagy in a transcription-dependent fashion implicating HSPB1. Can modulate the activity of the telomerase complex and may be involved in telomere maintenance. In the cytoplasm proposed to dissociate the BECN1:BCL2 complex via competitive interaction with BECN1 leading to autophagy activation. Can protect BECN1 and ATG5 from calpain-mediated cleavage and thus proposed to control their proautophagic and proapoptotic functions and to regulate the extent and severity of inflammation-associated cellular injury. In myeloid cells has a protective role against endotoxemia and bacterial infection by promoting autophagy. Involved in endosomal translocation and activation of TLR9 in response to CpG-DNA in macrophages. Functionally, in the extracellular compartment (following either active secretion or passive release) involved in regulation of the inflammatory response. Fully reduced HGMB1 (which subsequently gets oxidized after release) in association with CXCL12 mediates the recruitment of inflammatory cells during the initial phase of tissue injury; the CXCL12:HMGB1 complex triggers CXCR4 homodimerization. Induces the migration of monocyte-derived immature dendritic cells and seems to regulate adhesive and migratory functions of neutrophils implicating AGER/RAGE and ITGAM. Can bind to various types of DNA and RNA including microbial unmethylated CpG-DNA to enhance the innate immune response to nucleic acids. Proposed to act in promiscuous DNA/RNA sensing which cooperates with subsequent discriminative sensing by specific pattern recognition receptors. Promotes extracellular DNA-induced AIM2 inflammasome activation implicating AGER/RAGE. Disulfide HMGB1 binds to transmembrane receptors, such as AGER/RAGE, TLR2, TLR4 and probably TREM1, thus activating their signal transduction pathways. Mediates the release of cytokines/chemokines such as TNF, IL-1, IL-6, IL-8, CCL2, CCL3, CCL4 and CXCL10. Promotes secretion of interferon-gamma by macrophage-stimulated natural killer (NK) cells in concert with other cytokines like IL-2 or IL-12. TLR4 is proposed to be the primary receptor promoting macrophage activation and signaling through TLR4 seems to implicate LY96/MD-2. In bacterial LPS- or LTA-mediated inflammatory responses binds to the endotoxins and transfers them to CD14 for signaling to the respective TLR4:LY96 and TLR2 complexes. Contributes to tumor proliferation by association with ACER/RAGE. Can bind to IL1-beta and signals through the IL1R1:IL1RAP receptor complex. Binding to class A CpG activates cytokine production in plasmacytoid dendritic cells implicating TLR9, MYD88 and AGER/RAGE and can activate autoreactive B cells. Via HMGB1-containing chromatin immune complexes may also promote B cell responses to endogenous TLR9 ligands through a B-cell receptor (BCR)-dependent and ACER/RAGE-independent mechanism. Inhibits phagocytosis of apoptotic cells by macrophages; the function is dependent on poly-ADP-ribosylation and involves binding to phosphatidylserine on the cell surface of apoptotic cells. In adaptive immunity may be involved in enhancing immunity through activation of effector T-cells and suppression of regulatory T (TReg) cells. In contrast, without implicating effector or regulatory T-cells, required for tumor infiltration and activation of T-cells expressing the lymphotoxin LTA:LTB heterotrimer thus promoting tumor malignant progression. Also reported to limit proliferation of T-cells. Released HMGB1:nucleosome complexes formed during apoptosis can signal through TLR2 to induce cytokine production. Involved in induction of immunological tolerance by apoptotic cells; its pro-inflammatory activities when released by apoptotic cells are neutralized by reactive oxygen species (ROS)-dependent oxidation specifically on Cys-106. During macrophage activation by activated lymphocyte-derived self apoptotic DNA (ALD-DNA) promotes recruitment of ALD-DNA to endosomes. The sequence is that of High mobility group protein B1 (HMGB1) from Cricetulus griseus (Chinese hamster).